We begin with the raw amino-acid sequence, 178 residues long: 3-hydroxyacyl-[acyl-carrier-protein] dehydratase FabZ (178 aa).

The active site involves H54.

Belongs to the thioester dehydratase family. FabZ subfamily.

The protein localises to the cytoplasm. It catalyses the reaction a (3R)-hydroxyacyl-[ACP] = a (2E)-enoyl-[ACP] + H2O. In terms of biological role, involved in unsaturated fatty acids biosynthesis. Catalyzes the dehydration of short chain beta-hydroxyacyl-ACPs and long chain saturated and unsaturated beta-hydroxyacyl-ACPs. The polypeptide is 3-hydroxyacyl-[acyl-carrier-protein] dehydratase FabZ (Yersinia enterocolitica).